The primary structure comprises 459 residues: Magnesium transporter MRS2-11, chloroplastic (459 aa).

The transit peptide at 1–62 (MALTPIPSTF…EALKVLSRSK (62 aa)) directs the protein to the chloroplast. A disordered region spans residues 76–122 (GDYESLNVSDDDDGSDSNSSDGDNGGGRDDSKKIDSSSSSSSSDSTS). Basic and acidic residues predominate over residues 101–110 (GGRDDSKKID). A compositionally biased stretch (low complexity) spans 111-122 (SSSSSSSSDSTS). Transmembrane regions (helical) follow at residues 397–417 (LLLQ…GIFG) and 430–450 (AFWL…FLMY). The Required for magnesium transport activity signature appears at 417 to 419 (GMN).

Belongs to the CorA metal ion transporter (MIT) (TC 1.A.35.5) family. Expressed in the green part of the plant. Preferentially expressed in the spongy mesophyll cells and stomata of young leaves but also detected in cotyledons and at the base of the leaf petioles.

It is found in the plastid. It localises to the chloroplast membrane. In terms of biological role, high-affinity magnesium transporter that mediates the influx of magnesium in chloroplast. The chain is Magnesium transporter MRS2-11, chloroplastic (MRS2-11) from Arabidopsis thaliana (Mouse-ear cress).